The primary structure comprises 154 residues: Large ribosomal subunit protein uL30 (154 aa).

The segment at 114 to 139 is disordered; it reads PTLRLHPPRGGHDGIKHPTKEGGQLG. Residues 123–133 show a composition bias toward basic and acidic residues; it reads GGHDGIKHPTK.

The protein belongs to the universal ribosomal protein uL30 family. As to quaternary structure, part of the 50S ribosomal subunit.

This Natronomonas pharaonis (strain ATCC 35678 / DSM 2160 / CIP 103997 / JCM 8858 / NBRC 14720 / NCIMB 2260 / Gabara) (Halobacterium pharaonis) protein is Large ribosomal subunit protein uL30.